The following is a 323-amino-acid chain: Transcription initiation factor IIB 7 (323 aa).

Over residues 1-16 (MTRSTRQRERETAAKQ) the composition is skewed to basic and acidic residues. The segment at 1-35 (MTRSTRQRERETAAKQEEEEDSEEGVRECPECGSD) is disordered. The segment at 24 to 56 (EGVRECPECGSDNLVKSSDRAELVCNDCGLVVE) adopts a TFIIB-type zinc-finger fold. Positions 29, 32, 48, and 51 each coordinate Zn(2+). Repeat copies occupy residues 142–225 (SEID…SQEL) and 236–317 (KYVP…EQIE).

This sequence belongs to the TFIIB family.

In terms of biological role, stabilizes TBP binding to an archaeal box-A promoter. Also responsible for recruiting RNA polymerase II to the pre-initiation complex (DNA-TBP-TFIIB). This is Transcription initiation factor IIB 7 from Halobacterium salinarum (strain ATCC 700922 / JCM 11081 / NRC-1) (Halobacterium halobium).